Consider the following 1262-residue polypeptide: MNTRFPSSKMVPFHFPPSKLALWNPMPIGECIYLHLSYYRKPKLMVTEKAIRLAYRHAKQNKKNVPCFLLGSLTVDEDEEGVTLTIDRFDPGREIPECLERTPTASLPGDFLIPCRVHIQGLGSRDVIVHNADDFSSALKALQYHVCSKDFLDCGKLLCLRAQITPRESLDGVDFNLQWTAVTLANSFKCVPVKPIPIIPTALARNLSSNLNISQVQGTYKHGYITMDETRKLLLLLQSDPKVSSLPLVGIWLAGIIHVYSPQVWACCLRYMFSSSIQERVFSESGNFIIVLYSLTHKEPEFYECLPCESRTPDLQFQLLTNKETLHLFNNVEPSGKNPIHFELSAESQDAEAEAEVLSKISKTLPVKRSSQKLSPGKIPINKHDTDLEDEDFSPRPIPSPHPVSQKISKVQPSVPELSLVLDNNFTESSNQSNPLEMMTVENPLLIKPSQPELCDAKHSSEATTGEPFRRGPTNQLSQDTALRQSRGKQSSTCKKESLQFRNTNAKPSLSVPSPDVAEKLQAVSAGSMQKEDYPVRPSTLDSRQPSLAPQAQPHNLVFSTHNSTRPMELQVPTPSLPSYYPTNVCSCCQHHGHIQYSTINSWQGNTVGSIQDLRSESLPKHAFFHSSGCPSLCPNAIYSSSSPVSMKQGGMGAYSPHSNGEPSPVAGPSHVDSCVPHPCAMCMHTPNTAPDNGMMGLSPDAYRFVTEQDRQLRLLQAQIQRLLEAQSLDPGSHKTVATVEDTVKAAKQMELVSMEAQSSPGLHMRKSVSIAVSTGASLFWNAAGDDQEPDSQPKQDDTKISSEDMNFSVDINNEATSLPGSASSLKAVDIPSFEESNLAVEEVNQPLPESNSSSEQSKEPGVPVFFPNALLAESVSMCLQTAPTEGASNSTELPQGTKDEPYRPSDNQKIYQDLLGQVNHLLSNASQETEEPPTKAVVTNRECAKTQNTHHARKKRHNSGLVDKDCVLSATIKQLRSLGVKIDSPTKVKKNEQKVDHASVLACISPEAVISGLNYMSFGNVGMSSLSPTGVDLSMEANAIALKYLSENQLSQLSLARSKQNNGDSSVGLLHINSDRSTVGLSLVSPSNMSFATKKYMKRYGLLQSSDNSEDEEEPPSHADSESDHVLNRNPACRPVQCGHEKEPSWNACEIAQCSDCGSADTRTDVPVLRNITNQAVQPRATEHLNEDSAISLRNLKPNPAMNLRTGKAEFTHHPEKENERDIAVFPGTLPSPETLKQMNSMDSVGTFLDVKRLRQLPKLF.

The tract at residues 1 to 992 is interaction with RBM14; it reads MNTRFPSSKM…IDSPTKVKKN (992 aa). The interaction with CPAP stretch occupies residues 220 to 762; sequence YKHGYITMDE…VSMEAQSSPG (543 aa). Disordered regions lie at residues 369–409, 454–551, and 650–670; these read RSSQ…QKIS, LCDA…LAPQ, and GGMGAYSPHSNGEPSPVAGPS. Polar residues-rich tracts occupy residues 473-493, 500-512, and 540-551; these read PTNQLSQDTALRQSRGKQSST, QFRNTNAKPSLSV, and TLDSRQPSLAPQ. The interval 567 to 760 is PIN1-binding; that stretch reads PMELQVPTPS…ELVSMEAQSS (194 aa). 2 positions are modified to phosphoserine: Ser-733 and Ser-760. Disordered regions lie at residues 782–804, 883–904, 925–959, and 1106–1129; these read NAAGDDQEPDSQPKQDDTKISSE, APTEGASNSTELPQGTKDEPYR, NASQETEEPPTKAVVTNRECAKTQNTHHARKKRHN, and SSDNSEDEEEPPSHADSESDHVLN. The span at 792–803 shows a compositional bias: basic and acidic residues; that stretch reads SQPKQDDTKISS. Residues 883-895 are compositionally biased toward polar residues; the sequence is APTEGASNSTELP. The span at 949-959 shows a compositional bias: basic residues; it reads NTHHARKKRHN. Residue Ser-1110 is modified to Phosphoserine. Basic and acidic residues predominate over residues 1116-1128; it reads PPSHADSESDHVL.

As to quaternary structure, homodimer. Interacts with PIN1 via its WW domain. This interaction is dependent on Stil mitotic phosphorylation. Interacts with CPAP. Interacts with RBM14 and this interaction interferes with the interaction of STIL with CPAP. Forms a complex with CPAP and SASS6. nteracts (via N-terminus) with CEP85; this interaction is essential for efficient centriolar targeting of STIL and subsequent PLK4 activation. Ubiquitinated. Post-translationally, phosphorylated following the activation of the mitotic checkpoint. Ubiquitously expressed in adult and fetal tissues. Highly expressed in hematopoietic tissues such as thymus, bone marrow and spleen.

It localises to the cytoplasm. It is found in the cytosol. Its subcellular location is the cytoskeleton. The protein resides in the microtubule organizing center. The protein localises to the centrosome. It localises to the centriole. It is found in the cell cortex. Immediate-early gene. Plays an important role in embryonic development as well as in cellular growth and proliferation; its long-term silencing affects cell survival and cell cycle distribution as well as decreases CDK1 activity correlated with reduced phosphorylation of CDK1. Plays a role as a positive regulator of the sonic hedgehog pathway, acting downstream of PTCH1. Plays an important role in the regulation of centriole duplication. Required for the onset of procentriole formation and proper mitotic progression. During procentriole formation, is essential for the correct loading of SASS6 and CPAP to the base of the procentriole to initiate procentriole assembly. In complex with STIL acts as a modulator of PLK4-driven cytoskeletal rearrangements and directional cell motility. The polypeptide is SCL-interrupting locus protein homolog (Stil) (Mus musculus (Mouse)).